We begin with the raw amino-acid sequence, 344 residues long: N-acetyl-gamma-glutamyl-phosphate reductase (344 aa).

The active site involves C150.

The protein belongs to the NAGSA dehydrogenase family. Type 1 subfamily.

It localises to the cytoplasm. It catalyses the reaction N-acetyl-L-glutamate 5-semialdehyde + phosphate + NADP(+) = N-acetyl-L-glutamyl 5-phosphate + NADPH + H(+). Its pathway is amino-acid biosynthesis; L-arginine biosynthesis; N(2)-acetyl-L-ornithine from L-glutamate: step 3/4. Its function is as follows. Catalyzes the NADPH-dependent reduction of N-acetyl-5-glutamyl phosphate to yield N-acetyl-L-glutamate 5-semialdehyde. The polypeptide is N-acetyl-gamma-glutamyl-phosphate reductase (Ectopseudomonas mendocina (strain ymp) (Pseudomonas mendocina)).